The primary structure comprises 668 residues: Phosphoglycerate transport system sensor protein PgtB (668 aa).

Helical transmembrane passes span 20–40 (GAFL…LYSW) and 342–362 (LILV…HYFI). The HAMP domain maps to 364–416 (SRLVKRFTALNQAVVQIGLGRTDSTIPVYGRDELGRIARLLRHTLGQLNMQRR). The 210-residue stretch at 454–663 (TLAHEINQPL…CVVLQFSVTD (210 aa)) folds into the Histidine kinase domain. A Phosphohistidine; by autocatalysis modification is found at histidine 457.

Its subcellular location is the cell inner membrane. The catalysed reaction is ATP + protein L-histidine = ADP + protein N-phospho-L-histidine.. Its function is as follows. Member of the two-component regulatory system PgtB/PgtA that regulates the inducible phosphoglycerate transport system. Activates PgtA by phosphorylation. This chain is Phosphoglycerate transport system sensor protein PgtB (pgtB), found in Salmonella typhimurium (strain LT2 / SGSC1412 / ATCC 700720).